A 576-amino-acid chain; its full sequence is High-affinity choline transporter 1 (576 aa).

The helical transmembrane segment at Gly6–Arg26 threads the bilayer. The Cytoplasmic segment spans residues Lys27–Asn51. The helical transmembrane segment at Ile52–Asn72 threads the bilayer. Topologically, residues Gly73–Gly82 are extracellular. The chain crosses the membrane as a helical span at residues Leu83 to Phe103. Over Ala104–Arg126 the chain is Cytoplasmic. The helical transmembrane segment at Ile127–Leu147 threads the bilayer. The Extracellular portion of the chain corresponds to Ser148–Ser165. A helical membrane pass occupies residues Val166 to Ala186. Over Tyr187 to Gln192 the chain is Cytoplasmic. The helical transmembrane segment at Leu193–Ala213 threads the bilayer. The Extracellular segment spans residues Lys214 to Thr233. The helical transmembrane segment at Ser234–Phe254 threads the bilayer. The Cytoplasmic segment spans residues Gln255–Ser270. Residues Phe271 to Ala291 form a helical membrane-spanning segment. The Extracellular portion of the chain corresponds to Arg292–Asn319. An N-linked (GlcNAc...) asparagine glycan is attached at Asn306. The helical transmembrane segment at Met320–Gly340 threads the bilayer. The Cytoplasmic portion of the chain corresponds to Ala341–Glu378. The helical transmembrane segment at Val379–Leu399 threads the bilayer. The Extracellular segment spans residues Thr400–Trp408. Residues Tyr409–Met429 traverse the membrane as a helical segment. Residues Pro430–Ser437 are Cytoplasmic-facing. A helical membrane pass occupies residues Leu438–Leu458. Residues Pro459–Thr478 are Extracellular-facing. Residues Thr479–Phe499 traverse the membrane as a helical segment. The Cytoplasmic segment spans residues Lys500–Asn576. A disordered region spans residues Ala541 to Asn576. Polar residues predominate over residues Ser566 to Asn576.

This sequence belongs to the sodium:solute symporter (SSF) (TC 2.A.21) family. As to expression, detected in the nervous system, including the nerve ring and cholinergic motor neurons of the ventral nerve cord.

The protein localises to the membrane. Its function is as follows. Imports choline from the extracellular space to the neuron with high affinity. Choline uptake is the rate-limiting step in acetylcholine synthesis. Sodium ion and chloride ion dependent. The protein is High-affinity choline transporter 1 (cho-1) of Caenorhabditis elegans.